The sequence spans 160 residues: Cytochrome b6-f complex subunit 4 (160 aa).

The next 3 membrane-spanning stretches (helical) occupy residues L36–V56, L95–E115, and T131–I151.

The protein belongs to the cytochrome b family. PetD subfamily. In terms of assembly, the 4 large subunits of the cytochrome b6-f complex are cytochrome b6, subunit IV (17 kDa polypeptide, petD), cytochrome f and the Rieske protein, while the 4 small subunits are petG, petL, petM and petN. The complex functions as a dimer.

The protein resides in the plastid. It localises to the chloroplast thylakoid membrane. Its function is as follows. Component of the cytochrome b6-f complex, which mediates electron transfer between photosystem II (PSII) and photosystem I (PSI), cyclic electron flow around PSI, and state transitions. The chain is Cytochrome b6-f complex subunit 4 from Chlorella vulgaris (Green alga).